The primary structure comprises 380 residues: Putative glutamate--cysteine ligase 2-1 (380 aa).

The protein belongs to the glutamate--cysteine ligase type 2 family. YbdK subfamily.

It carries out the reaction L-cysteine + L-glutamate + ATP = gamma-L-glutamyl-L-cysteine + ADP + phosphate + H(+). Functionally, ATP-dependent carboxylate-amine ligase which exhibits weak glutamate--cysteine ligase activity. This Mycolicibacterium vanbaalenii (strain DSM 7251 / JCM 13017 / BCRC 16820 / KCTC 9966 / NRRL B-24157 / PYR-1) (Mycobacterium vanbaalenii) protein is Putative glutamate--cysteine ligase 2-1.